The chain runs to 349 residues: Probable esterase Cgl0839 (349 aa).

Residues 60–329 (GTHQTWFQQY…EDIAGHLGLF (270 aa)) form the AB hydrolase-1 domain. The active-site Nucleophile is Ser142. Residues Asp296 and His325 contribute to the active site.

It belongs to the AB hydrolase superfamily. Acetyl esterase family. Homodimer.

Its function is as follows. Esterase that catalyzes the hydrolysis of 4-nitrophenyl acetate in vitro. In Corynebacterium glutamicum (strain ATCC 13032 / DSM 20300 / JCM 1318 / BCRC 11384 / CCUG 27702 / LMG 3730 / NBRC 12168 / NCIMB 10025 / NRRL B-2784 / 534), this protein is Probable esterase Cgl0839.